We begin with the raw amino-acid sequence, 1064 residues long: Ribosome quality control complex subunit NEMF (1064 aa).

The residue at position 7 (Thr-7) is a Phosphothreonine. Residues 296 to 359 are a coiled coil; it reads VDEFYSKIEG…LIEMNLQIVD (64 aa). Ser-417 carries the post-translational modification Phosphoserine. Residues 420–451 form a disordered region; the sequence is EDGDGDASIENSDAEAPKGKKKKQKNKQLQKP. Residues 438 to 447 are compositionally biased toward basic residues; sequence GKKKKQKNKQ. The stretch at 481-512 forms a coiled coil; it reads AAKKTQRTVEAAEKAFKSAEKKTKQTLKEVQT. The segment covering 694–707 has biased composition (acidic residues); it reads EQLEGGDSSEEETE. 2 disordered regions span residues 694 to 718 and 731 to 973; these read EQLE…DVEL and SGRD…SLTG. Residues 731–756 are compositionally biased toward basic and acidic residues; the sequence is SGRDELSSEDGEAKAVTKDQEPIGEM. Ser-737 carries the phosphoserine modification. Residues 771-781 are compositionally biased toward polar residues; the sequence is IDLSHLQSQRP. Basic and acidic residues predominate over residues 828–839; sequence IEEKDKERESAV. Residues 858–882 are a coiled coil; that stretch reads KRGQKSKMKKMKEKYKDQDDEDREL. The span at 859–870 shows a compositional bias: basic residues; sequence RGQKSKMKKMKE. A compositionally biased stretch (basic and acidic residues) spans 947-959; that stretch reads DDPHDDKEEHDLD. Polar residues predominate over residues 960-973; sequence QQGNEENLFDSLTG.

It belongs to the NEMF family. In terms of assembly, component of the ribosome quality control complex (RQC), composed of the E3 ubiquitin ligase LTN1, TCF25 and NEMF associated with the 60S ribosomal subunit. The complex probably also contains VCP/p97 and its ubiquitin-binding cofactors. Interacts (via its N-terminus) with XPO1.

Its subcellular location is the cytoplasm. The protein resides in the cytosol. It localises to the nucleus. Its function is as follows. Key component of the ribosome quality control complex (RQC), a ribosome-associated complex that mediates the extraction of incompletely synthesized nascent chains from stalled ribosomes as well as their ubiquitin-mediated proteasomal degradation. Thereby, frees 60S subunit ribosomes from the stalled translation complex and prevents the accumulation of nascent polypeptide chains that are potentially toxic for the cell. Within the RQC complex, NEMF specifically binds stalled 60S ribosomal subunits by recognizing an exposed, nascent chain-conjugated tRNA moiety and promotes the recruitment of LTN1 to stalled 60S subunits. Following binding to stalled 60S ribosomal subunits, NEMF mediates CAT tailing by recruiting alanine-charged tRNA to the A-site and directing the elongation of stalled nascent chains independently of mRNA or 40S subunits, leading to non-templated C-terminal alanine extensions (CAT tails). Mainly recruits alanine-charged tRNAs, but can also other amino acid-charged tRNAs. CAT tailing is required to promote ubiquitination of stalled nascent chains by different E3 ubiquitin-protein ligases. In the canonical RQC pathway (RQC-L), CAT tailing facilitates LTN1-dependent ubiquitination by exposing lysine residues that would otherwise remain buried in the ribosomal exit tunnel. In the alternative RQC pathway (RQC-C) CAT tailing creates an C-degron mainly composed of alanine that is recognized by the CRL2(KLHDC10) and RCHY1/PIRH2 E3 ligases, leading to ubiquitination and degradation of stalled nascent chains. NEMF may also indirectly play a role in nuclear export. The sequence is that of Ribosome quality control complex subunit NEMF from Mus musculus (Mouse).